The sequence spans 241 residues: Dolichol-phosphate mannosyltransferase subunit 1 (241 aa).

The GDP-alpha-D-mannose site is built by Pro13, Tyr15, Glu17, Ile44, Asp46, Asp99, Ala100, Asp101, Arg128, Arg215, and Lys221. Asp101 is a binding site for Mg(2+). Asp101 lines the Mn(2+) pocket.

Belongs to the glycosyltransferase 2 family. It depends on Mg(2+) as a cofactor. Mn(2+) is required as a cofactor. The cofactor is Ca(2+).

Its subcellular location is the endoplasmic reticulum. The catalysed reaction is a di-trans,poly-cis-dolichyl phosphate + GDP-alpha-D-mannose = a di-trans,poly-cis-dolichyl beta-D-mannosyl phosphate + GDP. Its pathway is protein modification; protein glycosylation. Functionally, transfers mannose from GDP-mannose to dolichol monophosphate to form dolichol phosphate mannose (Dol-P-Man) which is the mannosyl donor in pathways leading to N-glycosylation, glycosyl phosphatidylinositol membrane anchoring, and O-mannosylation of proteins. In Drosophila melanogaster (Fruit fly), this protein is Dolichol-phosphate mannosyltransferase subunit 1.